A 138-amino-acid polypeptide reads, in one-letter code: Large ribosomal subunit protein uL16 (138 aa).

The span at 1–13 (MLQPSRRKFRKEQ) shows a compositional bias: basic residues. The tract at residues 1–22 (MLQPSRRKFRKEQKGRNTGIAT) is disordered.

The protein belongs to the universal ribosomal protein uL16 family. In terms of assembly, part of the 50S ribosomal subunit.

Functionally, binds 23S rRNA and is also seen to make contacts with the A and possibly P site tRNAs. In Methylibium petroleiphilum (strain ATCC BAA-1232 / LMG 22953 / PM1), this protein is Large ribosomal subunit protein uL16.